The sequence spans 356 residues: Heparan sulfate 2-O-sulfotransferase 1 (356 aa).

Topologically, residues 1–11 (MGLLRIMMPPK) are cytoplasmic. The helical; Signal-anchor for type II membrane protein transmembrane segment at 12 to 28 (LQLLAVVAFAVAMLFLE) threads the bilayer. The stretch at 24 to 51 (MLFLENQIQKLEESRAKLERAIARHEVR) forms a coiled coil. The Lumenal segment spans residues 29–356 (NQIQKLEESR…FYEKIYPKSN (328 aa)). Residues lysine 83, threonine 84, alanine 85, serine 86, threonine 87, and serine 88 each coordinate adenosine 3',5'-bisphosphate. 2 N-linked (GlcNAc...) asparagine glycosylation sites follow: asparagine 108 and asparagine 127. Catalysis depends on residues histidine 140 and histidine 142. 2 residues coordinate adenosine 3',5'-bisphosphate: arginine 164 and serine 172. Disulfide bonds link cysteine 201–cysteine 209 and cysteine 222–cysteine 228. Adenosine 3',5'-bisphosphate is bound by residues tyrosine 279, serine 285, threonine 290, and lysine 293.

The protein belongs to the sulfotransferase 3 family. Homotrimer. Interacts with the C5-epimerase GLCE. Post-translationally, N-glycosylated.

Its subcellular location is the golgi apparatus membrane. Catalyzes the transfer of a sulfo group from 3'-phospho-5'-adenylyl sulfate (PAPS) to the 2-OH position of iduronic acid (IdoA) or glucuronic acid (GlcA) within the heparan sulfate (HS) chain and participates in HS biosynthesis. Required for metanephric development of kidney formation, suggesting that 2-O-sulfation within HS is essential for signaling between ureteric bud and metanephric mesenchyme. The protein is Heparan sulfate 2-O-sulfotransferase 1 of Cricetulus griseus (Chinese hamster).